Here is a 447-residue protein sequence, read N- to C-terminus: Rab GDP dissociation inhibitor alpha (447 aa).

It belongs to the Rab GDI family. Interacts with RHOH. Interacts with the non-phosphorylated forms of RAB1A, RAB3A, RAB5A, RAB5B, RAB5C, RAB8A, RAB8B, RAB10, RAB12, RAB35, and RAB43. As to expression, brain; predominant in neural and sensory tissues.

It is found in the cytoplasm. It localises to the golgi apparatus. The protein resides in the trans-Golgi network. Regulates the GDP/GTP exchange reaction of most Rab proteins by inhibiting the dissociation of GDP from them, and the subsequent binding of GTP to them. Promotes the dissociation of GDP-bound Rab proteins from the membrane and inhibits their activation. Promotes the dissociation of RAB1A, RAB3A, RAB5A and RAB10 from membranes. This chain is Rab GDP dissociation inhibitor alpha (GDI1), found in Homo sapiens (Human).